Reading from the N-terminus, the 397-residue chain is Protein Mx1 (397 aa).

It belongs to the TRAFAC class dynamin-like GTPase superfamily. Dynamin/Fzo/YdjA family.

In Mus musculus (Mouse), this protein is Protein Mx1 (Mx1).